The following is a 116-amino-acid chain: Flagellar transcriptional regulator FlhD (116 aa).

Belongs to the FlhD family. As to quaternary structure, homodimer; disulfide-linked. Forms a heterohexamer composed of two FlhC and four FlhD subunits. Each FlhC binds a FlhD dimer, forming a heterotrimer, and a hexamer assembles by dimerization of two heterotrimers.

The protein resides in the cytoplasm. Functions in complex with FlhC as a master transcriptional regulator that regulates transcription of several flagellar and non-flagellar operons by binding to their promoter region. Activates expression of class 2 flagellar genes, including fliA, which is a flagellum-specific sigma factor that turns on the class 3 genes. Also regulates genes whose products function in a variety of physiological pathways. The sequence is that of Flagellar transcriptional regulator FlhD from Escherichia coli O9:H4 (strain HS).